The primary structure comprises 357 residues: MTLWVVKIGTSLLRGETATTIDGYARCFAGAMDRGDQVVLVTSGAVGLGCQKLALTNRPDTVVALQAAAAIGQGALMGLYERAMARHGRSVAQVLLTRSDLADRRRYQNASGTLRQLLSWGVLPVINENDALSPAELRFGDNDTLSALVAAAVEAQQLILLTDVDRLYSSDPRVDANAEPISDIRHPRELDSLEQGAGDGGRWGTGGMTTKLAAARIATASGITVQLADGRDPARLEALLQGQRGGTVFHPHPEPLGNRRSWLAHVLRPEGELQLDAGACAALQHRGASLLLVGVTAVRGDFAANQPIQLLDPDGEDLGRGLCSMDSDQLRAAMNDPSPGESSPVVVHRDGLVLRSR.

ATP is bound at residue K7. Substrate is bound by residues S43, D130, and N142. ATP is bound by residues 162–163 and 205–211; these read TD and TGGMTTK. A PUA domain is found at 270 to 353; that stretch reads EGELQLDAGA…PVVVHRDGLV (84 aa).

This sequence belongs to the glutamate 5-kinase family.

Its subcellular location is the cytoplasm. It carries out the reaction L-glutamate + ATP = L-glutamyl 5-phosphate + ADP. Its pathway is amino-acid biosynthesis; L-proline biosynthesis; L-glutamate 5-semialdehyde from L-glutamate: step 1/2. Functionally, catalyzes the transfer of a phosphate group to glutamate to form L-glutamate 5-phosphate. The protein is Glutamate 5-kinase of Synechococcus sp. (strain CC9605).